We begin with the raw amino-acid sequence, 281 residues long: uncharacterized protein (281 aa).

Residues 242-281 are a coiled coil; sequence IDKQSRKKNIIREINDIKSKINDLSNYMDNLISELDDLFD.

This is an uncharacterized protein from Acanthamoeba polyphaga (Amoeba).